A 585-amino-acid polypeptide reads, in one-letter code: Glutamate decarboxylase 2 (585 aa).

The segment covering Met-1–Glu-14 has biased composition (low complexity). Positions Met-1 to Gly-24 are disordered. Ser-3, Ser-6, Ser-10, and Ser-13 each carry phosphoserine. 2 S-palmitoyl cysteine lipidation sites follow: Cys-30 and Cys-45. Gln-181 to Ser-183 serves as a coordination point for substrate. Lys-396 is modified (N6-(pyridoxal phosphate)lysine). Arg-558 is a substrate binding site.

Belongs to the group II decarboxylase family. In terms of assembly, homodimer. It depends on pyridoxal 5'-phosphate as a cofactor. In terms of processing, phosphorylated; which does not affect kinetic parameters or subcellular location. Palmitoylated; which is required for presynaptic clustering.

The protein localises to the cytoplasm. The protein resides in the cytosol. Its subcellular location is the cytoplasmic vesicle. It is found in the presynaptic cell membrane. It localises to the golgi apparatus membrane. The catalysed reaction is L-glutamate + H(+) = 4-aminobutanoate + CO2. Functionally, catalyzes the production of GABA. The protein is Glutamate decarboxylase 2 of Homo sapiens (Human).